Consider the following 738-residue polypeptide: Phosphoribosylformylglycinamidine synthase subunit PurL (738 aa).

His-53 is an active-site residue. Tyr-56 and Lys-95 together coordinate ATP. Glu-97 provides a ligand contact to Mg(2+). Residues 98-101 and Arg-120 each bind substrate; that span reads SHNH. His-99 serves as the catalytic Proton acceptor. Position 121 (Asp-121) interacts with Mg(2+). Residue Gln-244 coordinates substrate. Asp-274 provides a ligand contact to Mg(2+). 318 to 320 is a binding site for substrate; that stretch reads ESQ. ATP contacts are provided by Asp-499 and Gly-536. Asn-537 contacts Mg(2+). Ser-539 is a binding site for substrate.

The protein belongs to the FGAMS family. Monomer. Part of the FGAM synthase complex composed of 1 PurL, 1 PurQ and 2 PurS subunits.

The protein resides in the cytoplasm. The catalysed reaction is N(2)-formyl-N(1)-(5-phospho-beta-D-ribosyl)glycinamide + L-glutamine + ATP + H2O = 2-formamido-N(1)-(5-O-phospho-beta-D-ribosyl)acetamidine + L-glutamate + ADP + phosphate + H(+). The protein operates within purine metabolism; IMP biosynthesis via de novo pathway; 5-amino-1-(5-phospho-D-ribosyl)imidazole from N(2)-formyl-N(1)-(5-phospho-D-ribosyl)glycinamide: step 1/2. In terms of biological role, part of the phosphoribosylformylglycinamidine synthase complex involved in the purines biosynthetic pathway. Catalyzes the ATP-dependent conversion of formylglycinamide ribonucleotide (FGAR) and glutamine to yield formylglycinamidine ribonucleotide (FGAM) and glutamate. The FGAM synthase complex is composed of three subunits. PurQ produces an ammonia molecule by converting glutamine to glutamate. PurL transfers the ammonia molecule to FGAR to form FGAM in an ATP-dependent manner. PurS interacts with PurQ and PurL and is thought to assist in the transfer of the ammonia molecule from PurQ to PurL. This is Phosphoribosylformylglycinamidine synthase subunit PurL from Leuconostoc mesenteroides subsp. mesenteroides (strain ATCC 8293 / DSM 20343 / BCRC 11652 / CCM 1803 / JCM 6124 / NCDO 523 / NBRC 100496 / NCIMB 8023 / NCTC 12954 / NRRL B-1118 / 37Y).